The chain runs to 264 residues: Glutamate racemase (264 aa).

Residues 10–11 and 42–43 contribute to the substrate site; these read DS and YG. The Proton donor/acceptor role is filled by Cys-73. Residue 74-75 coordinates substrate; it reads NT. The Proton donor/acceptor role is filled by Cys-183. 184–185 serves as a coordination point for substrate; sequence TH.

Belongs to the aspartate/glutamate racemases family.

The enzyme catalyses L-glutamate = D-glutamate. It functions in the pathway cell wall biogenesis; peptidoglycan biosynthesis. Its function is as follows. Provides the (R)-glutamate required for cell wall biosynthesis. The sequence is that of Glutamate racemase from Streptococcus agalactiae serotype III (strain NEM316).